A 251-amino-acid chain; its full sequence is MNLNSIPAFQDNYIWVLSNNEGRCLIVDPGEAAPVLNAIKEKNWQPEAIFLTHHHHDHVGGVKELLQHFPHVVVYGPAETQDKGTTRVVKDGDSALVLGHEFSIFATPGHTLGHICYFSHPYLFCGDTLFSGGCGRLFEGTASQMYQSLKKISALPDDTLICCAHEYTLANMKFALSILPHDSFINEYYRKVNELRAKNQITLPVILKNERKNNIFLRTEDPDLINEINKETKLQQPEERFAWLRSKKDSF.

Residues His-53, His-55, Asp-57, His-58, His-110, Asp-127, and His-165 each coordinate Zn(2+).

This sequence belongs to the metallo-beta-lactamase superfamily. Glyoxalase II family. Monomer. Requires Zn(2+) as cofactor.

It catalyses the reaction an S-(2-hydroxyacyl)glutathione + H2O = a 2-hydroxy carboxylate + glutathione + H(+). It participates in secondary metabolite metabolism; methylglyoxal degradation; (R)-lactate from methylglyoxal: step 2/2. In terms of biological role, thiolesterase that catalyzes the hydrolysis of S-D-lactoyl-glutathione to form glutathione and D-lactic acid. The chain is Hydroxyacylglutathione hydrolase from Citrobacter koseri (strain ATCC BAA-895 / CDC 4225-83 / SGSC4696).